Consider the following 497-residue polypeptide: Serine/arginine-rich protein PSR (497 aa).

The first 19 residues, 1 to 19, serve as a signal peptide directing secretion; the sequence is MYSRCIALVFVGLLASSLA. At 20 to 366 the chain is on the extracellular side; that stretch reads ANCYGPAGKL…HHGLSSQKLG (347 aa). N-linked (GlcNAc...) asparagine glycans are attached at residues Asn92, Asn193, Asn202, Asn261, and Asn283. A helical membrane pass occupies residues 367-387; it reads LAIGLPIAGVFLIILIAAAII. Over 388–497 the chain is Cytoplasmic; the sequence is YYRKRRESEK…ESASRDSDSD (110 aa). Positions 424-450 are necessary for phosphorylation by PSRPK in vitro; sequence MGSKTMQAMLDMRDDDESEHDSDDGYG. The segment covering 436 to 447 has biased composition (acidic residues); it reads RDDDESEHDSDD. Residues 436–497 are disordered; that stretch reads RDDDESEHDS…ESASRDSDSD (62 aa). A compositionally biased stretch (basic residues) spans 459–471; that stretch reads GRSRSRSRSRSVS. Positions 476–497 are enriched in basic and acidic residues; it reads GSRDARSESDPGESASRDSDSD.

Post-translationally, phosphorylated on serine residues in the RS domain by PSRPK.

Its subcellular location is the membrane. This chain is Serine/arginine-rich protein PSR, found in Physarum polycephalum (Slime mold).